The chain runs to 256 residues: Pimeloyl-[acyl-carrier protein] methyl ester esterase (256 aa).

Residues 15 to 242 (HLVLLHGWGL…AAHAPFISHP (228 aa)) form the AB hydrolase-1 domain. Residues W22, 82–83 (SL), and 143–147 (FLALQ) contribute to the substrate site. S82 functions as the Nucleophile in the catalytic mechanism. Catalysis depends on residues D207 and H235. Residue H235 participates in substrate binding.

The protein belongs to the AB hydrolase superfamily. Carboxylesterase BioH family. As to quaternary structure, monomer.

The protein localises to the cytoplasm. It carries out the reaction 6-carboxyhexanoyl-[ACP] methyl ester + H2O = 6-carboxyhexanoyl-[ACP] + methanol + H(+). It participates in cofactor biosynthesis; biotin biosynthesis. Functionally, the physiological role of BioH is to remove the methyl group introduced by BioC when the pimeloyl moiety is complete. It allows to synthesize pimeloyl-ACP via the fatty acid synthetic pathway through the hydrolysis of the ester bonds of pimeloyl-ACP esters. The chain is Pimeloyl-[acyl-carrier protein] methyl ester esterase from Shigella dysenteriae serotype 1 (strain Sd197).